The following is a 414-amino-acid chain: Arrestin domain-containing protein 3 (414 aa).

Short sequence motifs (PPxY motif) lie at residues Pro-346–Tyr-349 and Pro-391–Tyr-394. Positions Leu-393–Arg-414 are disordered. Over residues Ala-405 to Arg-414 the composition is skewed to basic and acidic residues.

The protein belongs to the arrestin family. As to quaternary structure, interacts (via PPxY motifs) with NEDD4 (via WW domains). Interacts with ADRB2. Interacts with ADRB3. Interacts with HGS (via PPxY motifs). Does not bind TXN (thioredoxin). Interacts with ITCH.

The protein localises to the cytoplasm. Its subcellular location is the cell membrane. It localises to the lysosome. The protein resides in the endosome. It is found in the early endosome. Adapter protein that plays a role in regulating cell-surface expression of adrenergic receptors and probably also other G protein-coupled receptors. Plays a role in NEDD4-mediated ubiquitination and endocytosis af activated ADRB2 and subsequent ADRB2 degradation. May recruit NEDD4 to ADRB2. Alternatively, may function as adapter protein that does not play a major role in recruiting NEDD4 to ADRB2, but rather plays a role in a targeting ADRB2 to endosomes. This Bos taurus (Bovine) protein is Arrestin domain-containing protein 3 (ARRDC3).